The chain runs to 168 residues: Peptide deformylase 2 (168 aa).

The Fe cation site is built by Cys-91 and His-133. Glu-134 is an active-site residue. His-137 is a Fe cation binding site.

It belongs to the polypeptide deformylase family. Requires Fe(2+) as cofactor.

It catalyses the reaction N-terminal N-formyl-L-methionyl-[peptide] + H2O = N-terminal L-methionyl-[peptide] + formate. In terms of biological role, removes the formyl group from the N-terminal Met of newly synthesized proteins. Requires at least a dipeptide for an efficient rate of reaction. N-terminal L-methionine is a prerequisite for activity but the enzyme has broad specificity at other positions. This is Peptide deformylase 2 from Vibrio parahaemolyticus serotype O3:K6 (strain RIMD 2210633).